A 625-amino-acid chain; its full sequence is SWR1-complex protein 3 (625 aa).

Disordered stretches follow at residues 1–53, 194–234, 254–273, and 324–434; these read MPAV…EVGN, KELK…KENK, KLKEQNKNKQGSPSSSMHDP, and NPVN…NAIK. Basic residues predominate over residues 20–31; it reads SRTRTRSRRGKR. Acidic residues predominate over residues 35 to 53; the sequence is DDDDDDDEESDDAYDEVGN. 2 stretches are compositionally biased toward basic and acidic residues: residues 194-214 and 221-234; these read KELKRKNDAEAKRLRMEERKR and IAKEQKLQLQKENK. The span at 261–270 shows a compositional bias: polar residues; sequence NKQGSPSSSM. Residues 342–352 are compositionally biased toward basic and acidic residues; that stretch reads KAKDVAEDHRL. Residues 353–364 are compositionally biased toward polar residues; that stretch reads NSITLVKSSKTA. 2 stretches are compositionally biased toward basic and acidic residues: residues 368 to 388 and 396 to 420; these read PEPKKADDENAEKQQSKEAKT and DVKKEEEDVKEKGVKSEDTQKKEDN.

Belongs to the SWC3 family. Component of the SWR1 chromatin remodeling complex composed of at least ACT1, ARP4, RVB1, RVB2, ARP6, YAF9, VPS71, VPS72, SWC3, SWC4, SWC5, SWC7 and SWR1, and perhaps BDF1.

The protein resides in the nucleus. In terms of biological role, component of the SWR1 complex which mediates the ATP-dependent exchange of histone H2A for the H2A variant HZT1 leading to transcriptional regulation of selected genes by chromatin remodeling. Involved in chromosome stability. The polypeptide is SWR1-complex protein 3 (SWC3) (Saccharomyces cerevisiae (strain ATCC 204508 / S288c) (Baker's yeast)).